Reading from the N-terminus, the 382-residue chain is Chaperone protein DnaJ (382 aa).

Positions 5 to 70 (DFYEILGVPK…QKRAAYDQYG (66 aa)) constitute a J domain. The CR-type zinc finger occupies 137–215 (GVTKEIRIPT…CHGHGRVEKT (79 aa)). The Zn(2+) site is built by Cys-150, Cys-153, Cys-167, Cys-170, Cys-189, Cys-192, Cys-203, and Cys-206. 4 CXXCXGXG motif repeats span residues 150–157 (CDICHGSG), 167–174 (CPTCHGSG), 189–196 (CPHCHGRG), and 203–210 (CNKCHGHG).

Belongs to the DnaJ family. In terms of assembly, homodimer. The cofactor is Zn(2+).

It localises to the cytoplasm. In terms of biological role, participates actively in the response to hyperosmotic and heat shock by preventing the aggregation of stress-denatured proteins and by disaggregating proteins, also in an autonomous, DnaK-independent fashion. Unfolded proteins bind initially to DnaJ; upon interaction with the DnaJ-bound protein, DnaK hydrolyzes its bound ATP, resulting in the formation of a stable complex. GrpE releases ADP from DnaK; ATP binding to DnaK triggers the release of the substrate protein, thus completing the reaction cycle. Several rounds of ATP-dependent interactions between DnaJ, DnaK and GrpE are required for fully efficient folding. Also involved, together with DnaK and GrpE, in the DNA replication of plasmids through activation of initiation proteins. The polypeptide is Chaperone protein DnaJ (Enterobacter sp. (strain 638)).